A 481-amino-acid chain; its full sequence is Aspartyl/glutamyl-tRNA(Asn/Gln) amidotransferase subunit B (481 aa).

Belongs to the GatB/GatE family. GatB subfamily. As to quaternary structure, heterotrimer of A, B and C subunits.

The enzyme catalyses L-glutamyl-tRNA(Gln) + L-glutamine + ATP + H2O = L-glutaminyl-tRNA(Gln) + L-glutamate + ADP + phosphate + H(+). It catalyses the reaction L-aspartyl-tRNA(Asn) + L-glutamine + ATP + H2O = L-asparaginyl-tRNA(Asn) + L-glutamate + ADP + phosphate + 2 H(+). Functionally, allows the formation of correctly charged Asn-tRNA(Asn) or Gln-tRNA(Gln) through the transamidation of misacylated Asp-tRNA(Asn) or Glu-tRNA(Gln) in organisms which lack either or both of asparaginyl-tRNA or glutaminyl-tRNA synthetases. The reaction takes place in the presence of glutamine and ATP through an activated phospho-Asp-tRNA(Asn) or phospho-Glu-tRNA(Gln). The protein is Aspartyl/glutamyl-tRNA(Asn/Gln) amidotransferase subunit B of Pseudomonas putida (strain ATCC 47054 / DSM 6125 / CFBP 8728 / NCIMB 11950 / KT2440).